The chain runs to 906 residues: Ectonucleotide pyrophosphatase/phosphodiesterase family member 1 (906 aa).

The tract at residues 1–22 is disordered; it reads MERDGDQAGHGPRHGSAGNGRE. The Cytoplasmic segment spans residues 1–58; sequence MERDGDQAGHGPRHGSAGNGRELESPAAASLLAPMDLGEEPLEKAERARPAKDPNTYK. At S25 the chain carries Phosphoserine. The Di-leucine motif signature appears at 27-34; it reads AAASLLAP. A helical; Signal-anchor for type II membrane protein transmembrane segment spans residues 59–79; it reads VLSLVLSVCVLTTILGCIFGL. Over 80–906 the chain is Extracellular; that stretch reads KPSCAKEVKS…THLPIFSQED (827 aa). SMB domains follow at residues 86–126 and 127–171; these read EVKS…VEPT and HIWT…DKKS. Intrachain disulfides connect C90-C104, C94-C122, C102-C115, C108-C114, C131-C148, C136-C166, C146-C159, C152-C158, C177-C223, and C185-C397. The N-linked (GlcNAc...) asparagine glycan is linked to N161. The interval 173–573 is phosphodiesterase; the sequence is VEETCESIDT…APNNGSHGSL (401 aa). 3 residues coordinate AMP: D200, T238, and N259. D200 and T238 together coordinate Zn(2+). T238 (AMP-threonine intermediate) is an active-site residue. T238 and N259 together coordinate CMP. The dTMP site is built by T238 and N259. Positions 238 and 259 each coordinate GMP. Residue T238 is modified to Phosphothreonine. A glycan (N-linked (GlcNAc...) asparagine) is linked at N267. Residues L272, K277, and Y322 each coordinate GMP. AMP contacts are provided by K277 and Y322. Residues K277 and Y322 each coordinate CMP. Position 322 (Y322) interacts with dTMP. N-linked (GlcNAc...) asparagine glycosylation is present at N323. D358 provides a ligand contact to AMP. Zn(2+) is bound by residues D358, H362, D405, and H406. CMP is bound at residue D358. D358 serves as a coordination point for dTMP. D358 provides a ligand contact to GMP. H362 provides a ligand contact to 2',3'-cGAMP. H406 is a binding site for AMP. Residue H406 participates in CMP binding. DTMP is bound at residue H406. Position 406 (H406) interacts with GMP. 6 cysteine pairs are disulfide-bonded: C413–C512, C462–C849, C596–C653, C607–C707, C609–C692, and C819–C829. N-linked (GlcNAc...) asparagine glycosylation is present at N459. S514 contacts 2',3'-cGAMP. H517 is an AMP binding site. H517 lines the Zn(2+) pocket. Residue H517 participates in CMP binding. H517 contributes to the dTMP binding site. H517 serves as a coordination point for GMP. N567 and N624 each carry an N-linked (GlcNAc...) asparagine glycan. The interval 579-628 is linker; it reads KPIYNPSHPKEEGFLSQCPIKSTSNDLGCTCDPWIVPIKDFEKQLNLTTE. The interval 635 to 906 is nuclease-like domain; the sequence is HMTVPYGRPR…THLPIFSQED (272 aa). Ca(2+) is bound by residues D781, D783, D785, R787, and D789.

This sequence belongs to the nucleotide pyrophosphatase/phosphodiesterase family. As to quaternary structure, ectonucleotide pyrophosphatase/phosphodiesterase family member 1: Homodimer. Ectonucleotide pyrophosphatase/phosphodiesterase family member 1: Interacts with INSR; leading to inhibit INSR autophosphorylation and subsequent activation of INSR kinase activity. Ectonucleotide pyrophosphatase/phosphodiesterase family member 1, secreted form: Monomeric. The cofactor is Zn(2+). N-glycosylated. In terms of processing, the secreted form is produced through cleavage at Lys-85 by intracellular processing. Selectively expressed on the surface of antibody-secreting cells. Expressed in osteocytes and osteoclasts.

The protein resides in the cell membrane. It is found in the basolateral cell membrane. The protein localises to the secreted. The catalysed reaction is Hydrolytically removes 5'-nucleotides successively from the 3'-hydroxy termini of 3'-hydroxy-terminated oligonucleotides.. The enzyme catalyses a ribonucleoside 5'-triphosphate + H2O = a ribonucleoside 5'-phosphate + diphosphate + H(+). It catalyses the reaction ATP + H2O = AMP + diphosphate + H(+). It carries out the reaction UTP + H2O = UMP + diphosphate + H(+). The catalysed reaction is GTP + H2O = GMP + diphosphate + H(+). The enzyme catalyses CTP + H2O = CMP + diphosphate + H(+). It catalyses the reaction 2',3'-cGAMP + 2 H2O = GMP + AMP + 2 H(+). It carries out the reaction P(1),P(4)-bis(5'-adenosyl) tetraphosphate + H2O = AMP + ATP + 2 H(+). The catalysed reaction is 3',5'-cyclic AMP + H2O = AMP + H(+). With respect to regulation, at low concentrations of ATP, a phosphorylated intermediate is formed which inhibits further hydrolysis. Its function is as follows. Nucleotide pyrophosphatase that generates diphosphate (PPi) and functions in bone mineralization and soft tissue calcification by regulating pyrophosphate levels. PPi inhibits bone mineralization and soft tissue calcification by binding to nascent hydroxyapatite crystals, thereby preventing further growth of these crystals. Preferentially hydrolyzes ATP, but can also hydrolyze other nucleoside 5' triphosphates such as GTP, CTP and UTP to their corresponding monophosphates with release of pyrophosphate, as well as diadenosine polyphosphates, and also 3',5'-cAMP to AMP. May also be involved in the regulation of the availability of nucleotide sugars in the endoplasmic reticulum and Golgi, and the regulation of purinergic signaling. Inhibits ectopic joint calcification and maintains articular chondrocytes by repressing hedgehog signaling; it is however unclear whether hedgehog inhibition is direct or indirect. Appears to modulate insulin sensitivity. Also involved in melanogenesis. Also able to hydrolyze 2',3'-cGAMP (cyclic GMP-AMP), a second messenger that activates TMEM173/STING and triggers type-I interferon production. 2',3'-cGAMP degradation takes place in the lumen or extracellular space, and not in the cytosol where it is produced; the role of 2',3'-cGAMP hydrolysis is therefore unclear. Not able to hydrolyze the 2',3'-cGAMP linkage isomer 3',3'-cGAMP. The chain is Ectonucleotide pyrophosphatase/phosphodiesterase family member 1 from Mus musculus (Mouse).